The following is a 313-amino-acid chain: MPVRIPDHLPAAEVLESENIFVMSETRAANQDIRPMKVLILNLMPNKIETETQLLRLLGNTPLQVDVDLLRIHDKESKHTSIDHMNTFYRDFEAVRHKNYDGLIITGAPLGQIDFEDVVYWDHIREIIDWSQEHVTSVLFLCWAAHAGLYHLYGLNRKILQQKRSGVFVHRRTSQHFPLLRGFDDEFFAPHSRFAEMDVEEIRQHPQLQLLAESDEAGAYLVLSRNNRNLFVMGHPEYQKSTLNEEYQRDLSQGLDPNVPQNYYRNDDPKDDAIARWHSHGSLLVSNWLNYYVYQLTPYDLSDMTAMTPWESR.

The active-site Acyl-thioester intermediate is the cysteine 142. Residues lysine 163 and serine 192 each coordinate substrate. Histidine 235 functions as the Proton acceptor in the catalytic mechanism. Glutamate 237 is an active-site residue. Substrate is bound at residue arginine 249.

Belongs to the MetA family.

It is found in the cytoplasm. The catalysed reaction is L-homoserine + succinyl-CoA = O-succinyl-L-homoserine + CoA. It participates in amino-acid biosynthesis; L-methionine biosynthesis via de novo pathway; O-succinyl-L-homoserine from L-homoserine: step 1/1. Transfers a succinyl group from succinyl-CoA to L-homoserine, forming succinyl-L-homoserine. The polypeptide is Homoserine O-succinyltransferase (Shewanella baltica (strain OS195)).